The primary structure comprises 520 residues: Ribonuclease Y (520 aa).

The Extracellular portion of the chain corresponds to 1 to 3 (MTP). A helical membrane pass occupies residues 4-24 (IMMVLISILLILLGLVVGYFV). Residues 25–520 (RKTIAEAKIA…RETRAVEYAK (496 aa)) lie on the Cytoplasmic side of the membrane. Positions 29–141 (AEAKIAGARG…KVDEMIRMQQ (113 aa)) form a coiled coil. The KH domain maps to 210-273 (TVSVVNLPND…ETARIALDKL (64 aa)). Positions 336–429 (VLKHSMEVAF…VAAADALSAA (94 aa)) constitute an HD domain.

Belongs to the RNase Y family. In terms of assembly, homodimer. Component of a possible RNA degradosome complex composed of rny, rnjA, rnjB, pnp, pfkA and eno (although rnjA and rnjB's presence is unclear). Interacts with RNA helicase CshA which may also be a member of the RNA degradosome complex. Interacts with full-length dynamin-like protein DynA. The cofactor is Mg(2+). Mn(2+) serves as cofactor. Requires Zn(2+) as cofactor.

Its subcellular location is the cell membrane. Shows preference for transcripts carrying a monophosphate group at the 5' end. Endoribonuclease that initiates mRNA decay. Initiates the decay of all SAM-dependent riboswitches, such as yitJ riboswitch. Involved in processing of the gapA operon mRNA, it cleaves between cggR and gapA. Is also the decay-initiating endonuclease for rpsO mRNA. Involved in degradation of type I toxin-antitoxin system bsrG/SR4 RNAs and a minor role in degradation of type I toxin-antitoxin system bsrE/SR5 degradation. This Bacillus subtilis (strain 168) protein is Ribonuclease Y (rny).